Reading from the N-terminus, the 45-residue chain is uncharacterized protein (45 aa).

This is an uncharacterized protein from Lolium latent virus (isolate Lolium/USA/US1/-) (LoLV).